The chain runs to 348 residues: Rhodopsin (348 aa).

The Extracellular portion of the chain corresponds to 1–33; sequence TEGPYFYIPMVNTTGIVRSPYEYPQYYLVNPAA. An N-linked (GlcNAc...) asparagine glycan is attached at Asn-12. Residues 34–58 traverse the membrane as a helical segment; sequence YAMLGAYMFFLIIVGFPVNFMTLYV. At 59-70 the chain is on the cytoplasmic side; the sequence is TLEHKKLRTPLN. The helical transmembrane segment at 71-93 threads the bilayer; it reads YILLNLAVADLFMVIGGFTTTIY. Residues 94-107 lie on the Extracellular side of the membrane; the sequence is TSMHGYFVLGRLGC. Cys-107 and Cys-184 are disulfide-bonded. The chain crosses the membrane as a helical span at residues 108–130; sequence NIEGFFATLGGMISLWSLAVLAI. A 'Ionic lock' involved in activated form stabilization motif is present at residues 131–133; it reads ERW. Over 131 to 149 the chain is Cytoplasmic; that stretch reads ERWVVVCKPISNFRFGENH. The helical transmembrane segment at 150–170 threads the bilayer; sequence AIMGVSLTWAMALACTVPPLV. The Extracellular portion of the chain corresponds to 171-199; it reads GWSRYIPEGMQCSCGIDYYTRAEGFNNES. N-linked (GlcNAc...) asparagine glycosylation occurs at Asn-197. A helical membrane pass occupies residues 200–221; that stretch reads FVLYMFFCHFTIPLTIIFFCYG. Residues 222–249 lie on the Cytoplasmic side of the membrane; it reads RLLCAVKEAAAAQQESETTQRAEREVTR. A helical membrane pass occupies residues 250 to 271; sequence MVIIMVIGFLICWLPYASVAWF. The Extracellular segment spans residues 272-283; that stretch reads IFTHQGSEFGPL. Residues 284-305 form a helical membrane-spanning segment; that stretch reads FMTIPAFFAKSSSIYNPMIYIC. At Lys-293 the chain carries N6-(retinylidene)lysine. Residues 306-348 are Cytoplasmic-facing; that stretch reads MNKQFRHCMITTLFCGKNPFEGEEEGASSTKTEASSASSVSPA. Residue Cys-320 is the site of S-palmitoyl cysteine attachment. The disordered stretch occupies residues 327 to 348; that stretch reads GEEEGASSTKTEASSASSVSPA. The segment covering 332 to 348 has biased composition (low complexity); it reads ASSTKTEASSASSVSPA.

It belongs to the G-protein coupled receptor 1 family. Opsin subfamily. Post-translationally, phosphorylated on some or all of the serine and threonine residues present in the C-terminal region. In terms of processing, contains one covalently linked retinal chromophore.

The protein resides in the membrane. It localises to the cell projection. It is found in the cilium. The protein localises to the photoreceptor outer segment. Its function is as follows. Photoreceptor required for image-forming vision at low light intensity. While most salt water fish species use retinal as chromophore, most freshwater fish use 3-dehydroretinal, or a mixture of retinal and 3-dehydroretinal. Light-induced isomerization of 11-cis to all-trans retinal triggers a conformational change that activates signaling via G-proteins. Subsequent receptor phosphorylation mediates displacement of the bound G-protein alpha subunit by arrestin and terminates signaling. The chain is Rhodopsin (rho) from Sargocentron microstoma (Smallmouth squirrelfish).